Reading from the N-terminus, the 278-residue chain is Urease accessory protein UreD (278 aa).

This sequence belongs to the UreD family. As to quaternary structure, ureD, UreF and UreG form a complex that acts as a GTP-hydrolysis-dependent molecular chaperone, activating the urease apoprotein by helping to assemble the nickel containing metallocenter of UreC. The UreE protein probably delivers the nickel.

The protein localises to the cytoplasm. Functionally, required for maturation of urease via the functional incorporation of the urease nickel metallocenter. The polypeptide is Urease accessory protein UreD (Staphylococcus epidermidis (strain ATCC 12228 / FDA PCI 1200)).